Reading from the N-terminus, the 122-residue chain is Large ribosomal subunit protein uL14 (122 aa).

Belongs to the universal ribosomal protein uL14 family. As to quaternary structure, part of the 50S ribosomal subunit. Forms a cluster with proteins L3 and L19. In the 70S ribosome, L14 and L19 interact and together make contacts with the 16S rRNA in bridges B5 and B8.

Its function is as follows. Binds to 23S rRNA. Forms part of two intersubunit bridges in the 70S ribosome. The chain is Large ribosomal subunit protein uL14 from Polynucleobacter asymbioticus (strain DSM 18221 / CIP 109841 / QLW-P1DMWA-1) (Polynucleobacter necessarius subsp. asymbioticus).